The sequence spans 1862 residues: Protein RRP5 homolog (1862 aa).

Positions Met-1–Lys-56 are disordered. Ala-2 bears the N-acetylalanine mark. Ser-7 is subject to Phosphoserine. A compositionally biased stretch (basic residues) spans Lys-43–Lys-56. 4 S1 motif domains span residues Gly-83–Asn-171, Gly-187–Glu-258, Gly-281–Arg-346, and Gly-365–Arg-436. A Phosphoserine modification is found at Ser-438. S1 motif domains are found at residues Gly-453 to Lys-522, Gly-542 to Arg-611, Gly-636 to Lys-707, Gly-729 to Arg-798, and Gly-846 to His-911. Residues Ser-999 to Val-1036 are disordered. The span at Val-1006–Glu-1019 shows a compositional bias: basic and acidic residues. Residues Lys-1020–Asn-1033 show a composition bias toward acidic residues. S1 motif domains lie at Gly-1047–Pro-1120, Gly-1160–Ile-1233, Gly-1241–Arg-1309, and Gly-1335–Leu-1407. Disordered regions lie at residues Leu-1406–Val-1520 and Arg-1545–Lys-1577. Composition is skewed to basic and acidic residues over residues Pro-1423–Lys-1437 and Arg-1445–Lys-1454. Residue Lys-1424 forms a Glycyl lysine isopeptide (Lys-Gly) (interchain with G-Cter in SUMO2) linkage. Ser-1468 and Ser-1490 each carry phosphoserine. Basic and acidic residues predominate over residues Lys-1566–Lys-1577. 4 HAT repeats span residues Gly-1590–Gln-1622, Glu-1696–Gly-1728, Gly-1766–Lys-1798, and Gly-1800–Gln-1835.

As to quaternary structure, interacts with NF-kappa-B p50/NFKB1 and NF-kappa-B p65/RELA. In terms of tissue distribution, ubiquitous.

It is found in the nucleus. Its subcellular location is the nucleolus. Essential for the generation of mature 18S rRNA, specifically necessary for cleavages at sites A0, 1 and 2 of the 47S precursor. Directly interacts with U3 snoRNA. The sequence is that of Protein RRP5 homolog (Pdcd11) from Mus musculus (Mouse).